We begin with the raw amino-acid sequence, 494 residues long: NADPH:adrenodoxin oxidoreductase, mitochondrial (494 aa).

A mitochondrion-targeting transit peptide spans 1-34 (MAPRCWRWWSWSAWPGVRPLPSRSTPTPGFCKKF). The FAD site is built by Ala-51, Glu-72, Leu-80, and Val-116. Residues 187 to 190 (QGNV), 231 to 232 (RR), and Glu-243 each bind NADP(+). A Phosphoserine modification is found at Ser-313. Residues Trp-401 and 408–410 (GVI) each bind FAD. Gly-408 contributes to the NADP(+) binding site.

Belongs to the ferredoxin--NADP reductase type 1 family. As to quaternary structure, monomer. Interacts directly with FDX1. FAD serves as cofactor.

It is found in the mitochondrion inner membrane. The enzyme catalyses 2 reduced [adrenodoxin] + NADP(+) + H(+) = 2 oxidized [adrenodoxin] + NADPH. The catalysed reaction is 2 reduced [2Fe-2S]-[ferredoxin] + NADP(+) + H(+) = 2 oxidized [2Fe-2S]-[ferredoxin] + NADPH. Its pathway is steroid metabolism; cholesterol metabolism. Serves as the first electron transfer protein in all the mitochondrial P450 systems including cholesterol side chain cleavage in all steroidogenic tissues, steroid 11-beta hydroxylation in the adrenal cortex, 25-OH-vitamin D3-24 hydroxylation in the kidney, and sterol C-27 hydroxylation in the liver. Also acts as a ferredoxin--NADP(+) reductase essential for coenzyme Q biosynthesis: together with FDX2, transfers the electrons required for the hydroxylation reaction performed by COQ6. The sequence is that of NADPH:adrenodoxin oxidoreductase, mitochondrial (Fdxr) from Rattus norvegicus (Rat).